Consider the following 153-residue polypeptide: Ubiquitin-conjugating enzyme E2 13 (153 aa).

One can recognise a UBC core domain in the interval 3–149 (SLPKRIIKET…AREWTKLYAK (147 aa)). The active-site Glycyl thioester intermediate is the C87. K92 is covalently cross-linked (Glycyl lysine isopeptide (Lys-Gly) (interchain with G-Cter in ubiquitin)).

The protein belongs to the ubiquitin-conjugating enzyme family. As to quaternary structure, heterodimer with MMS2.

It catalyses the reaction S-ubiquitinyl-[E1 ubiquitin-activating enzyme]-L-cysteine + [E2 ubiquitin-conjugating enzyme]-L-cysteine = [E1 ubiquitin-activating enzyme]-L-cysteine + S-ubiquitinyl-[E2 ubiquitin-conjugating enzyme]-L-cysteine.. It participates in protein modification; protein ubiquitination. Its function is as follows. Has a role in the DNA error-free postreplication repair (PRR) pathway. The UBC13/MMS2 heterodimer catalyzes the synthesis of non-canonical poly-ubiquitin chains that are linked through 'Lys-63'. This is Ubiquitin-conjugating enzyme E2 13 (UBC13) from Saccharomyces cerevisiae (strain ATCC 204508 / S288c) (Baker's yeast).